The sequence spans 107 residues: Phosphoribosyl-ATP pyrophosphatase (107 aa).

It belongs to the PRA-PH family.

The protein resides in the cytoplasm. The catalysed reaction is 1-(5-phospho-beta-D-ribosyl)-ATP + H2O = 1-(5-phospho-beta-D-ribosyl)-5'-AMP + diphosphate + H(+). It participates in amino-acid biosynthesis; L-histidine biosynthesis; L-histidine from 5-phospho-alpha-D-ribose 1-diphosphate: step 2/9. This is Phosphoribosyl-ATP pyrophosphatase from Bacillus cereus (strain Q1).